The following is a 557-amino-acid chain: Eudesmanediol synthase (557 aa).

Residues Asp310 and Asp314 each coordinate Mg(2+). Positions 310, 314, 450, and 453 each coordinate substrate. The DDXXD motif signature appears at 310 to 314 (DDTFD). Asn453 and Ser457 together coordinate Mg(2+).

Belongs to the terpene synthase family. Monomer. Mg(2+) is required as a cofactor. The cofactor is Mn(2+). In terms of tissue distribution, specifically expressed in roots.

The protein localises to the cytoplasm. The enzyme catalyses (2E,6E)-farnesyl diphosphate + 2 H2O = 7-epi-ent-eudesmane-5,11-diol + diphosphate. It participates in secondary metabolite biosynthesis; terpenoid biosynthesis. In terms of biological role, component of the volatile terpenes biosynthesis pathways. Dihydroxylated sesquiterpenoid synthase that generates dually hydroxylated products directly from (E,E)-farnesyl diphosphate, primarily eudesmane-2,11-diol, along with two closely related structural isomers. The protein is Eudesmanediol synthase of Zea mays (Maize).